The chain runs to 319 residues: Thymidylate synthase (319 aa).

DUMP-binding positions include Arg25 and Arg181–Arg182. Catalysis depends on Cys201, which acts as the Nucleophile. DUMP-binding positions include Arg221 to Asp224, Asn232, and His262 to Tyr264. Asp224 is a binding site for (6R)-5,10-methylene-5,6,7,8-tetrahydrofolate. Ala318 serves as a coordination point for (6R)-5,10-methylene-5,6,7,8-tetrahydrofolate.

This sequence belongs to the thymidylate synthase family. Bacterial-type ThyA subfamily. In terms of assembly, homodimer.

It localises to the cytoplasm. It catalyses the reaction dUMP + (6R)-5,10-methylene-5,6,7,8-tetrahydrofolate = 7,8-dihydrofolate + dTMP. Its pathway is pyrimidine metabolism; dTTP biosynthesis. In terms of biological role, catalyzes the reductive methylation of 2'-deoxyuridine-5'-monophosphate (dUMP) to 2'-deoxythymidine-5'-monophosphate (dTMP) while utilizing 5,10-methylenetetrahydrofolate (mTHF) as the methyl donor and reductant in the reaction, yielding dihydrofolate (DHF) as a by-product. This enzymatic reaction provides an intracellular de novo source of dTMP, an essential precursor for DNA biosynthesis. The sequence is that of Thymidylate synthase from Oenococcus oeni (strain ATCC BAA-331 / PSU-1).